The chain runs to 313 residues: Porphobilinogen deaminase (313 aa).

The residue at position 241 (Cys-241) is an S-(dipyrrolylmethanemethyl)cysteine.

It belongs to the HMBS family. As to quaternary structure, monomer. Dipyrromethane serves as cofactor.

The catalysed reaction is 4 porphobilinogen + H2O = hydroxymethylbilane + 4 NH4(+). It participates in porphyrin-containing compound metabolism; protoporphyrin-IX biosynthesis; coproporphyrinogen-III from 5-aminolevulinate: step 2/4. The protein operates within porphyrin-containing compound metabolism; chlorophyll biosynthesis. In terms of biological role, tetrapolymerization of the monopyrrole PBG into the hydroxymethylbilane pre-uroporphyrinogen in several discrete steps. This chain is Porphobilinogen deaminase, found in Chlorobium phaeobacteroides (strain DSM 266 / SMG 266 / 2430).